Reading from the N-terminus, the 271-residue chain is Phosphate import ATP-binding protein PstB (271 aa).

The ABC transporter domain occupies 13–266 (VRTAPVSEAE…PKHPYTEAYI (254 aa)). Position 57–64 (57–64 (GPSGCGKS)) interacts with ATP.

It belongs to the ABC transporter superfamily. Phosphate importer (TC 3.A.1.7) family. In terms of assembly, the complex is composed of two ATP-binding proteins (PstB), two transmembrane proteins (PstC and PstA) and a solute-binding protein (PstS).

Its subcellular location is the cell inner membrane. It carries out the reaction phosphate(out) + ATP + H2O = ADP + 2 phosphate(in) + H(+). Functionally, part of the ABC transporter complex PstSACB involved in phosphate import. Responsible for energy coupling to the transport system. This chain is Phosphate import ATP-binding protein PstB, found in Thermus thermophilus (strain ATCC 27634 / DSM 579 / HB8).